Here is a 105-residue protein sequence, read N- to C-terminus: uncharacterized protein (105 aa).

The next 2 helical transmembrane spans lie at 26-46 (NVLI…CIAI) and 66-86 (SALA…TLAI).

The protein resides in the cell membrane. This is an uncharacterized protein from Mycoplasma pneumoniae (strain ATCC 29342 / M129 / Subtype 1) (Mycoplasmoides pneumoniae).